The primary structure comprises 295 residues: Elongation factor Ts (295 aa).

An involved in Mg(2+) ion dislocation from EF-Tu region spans residues 79–82; sequence TDFV.

The protein belongs to the EF-Ts family.

The protein resides in the cytoplasm. Associates with the EF-Tu.GDP complex and induces the exchange of GDP to GTP. It remains bound to the aminoacyl-tRNA.EF-Tu.GTP complex up to the GTP hydrolysis stage on the ribosome. In Mycoplasma capricolum subsp. capricolum (strain California kid / ATCC 27343 / NCTC 10154), this protein is Elongation factor Ts.